A 548-amino-acid chain; its full sequence is Solute carrier family 22 member 7 (548 aa).

Residues 21 to 41 (VALLALPRVLLPLHFLLPIFL) traverse the membrane as a helical segment. N-linked (GlcNAc...) asparagine glycosylation occurs at Asn91. 11 helical membrane-spanning segments follow: residues 146 to 166 (AAST…GYLS), 180 to 200 (VSTL…MFAI), 204 to 224 (LTGS…LEWL), 234 to 254 (VLSS…GYLI), 259 to 279 (WLLL…WWVP), 346 to 366 (ISLC…GLSL), 376 to 397 (YQTQ…YLSV), 404 to 423 (LTQA…RLLV), 432 to 452 (TVLA…AYLF), 466 to 486 (MGLT…AALL), and 493 to 513 (LPKL…LLLP). Catalysis depends on Phe441, which acts as the Important for glutamate counteranion efflux. Residues 522-548 (ETIQDVERKSAPTSLQEEEMPMKQVQN) are disordered.

This sequence belongs to the major facilitator (TC 2.A.1) superfamily. Organic cation transporter (TC 2.A.1.19) family. In terms of tissue distribution, mainly expressed in liver and kidney. In kidney, expressed in proximal tubular cells. Also expressed in pancreas, small intestine, spinal cord, lung, brain and heart. Expressed in fetal liver.

The protein resides in the basolateral cell membrane. It is found in the apical cell membrane. Its subcellular location is the cell membrane. It localises to the cytoplasm. The protein localises to the cytosol. It carries out the reaction orotate(out) + L-glutamate(in) = orotate(in) + L-glutamate(out). It catalyses the reaction 3',5'-cyclic GMP(in) = 3',5'-cyclic GMP(out). The enzyme catalyses GMP(in) = GMP(out). The catalysed reaction is 2'-deoxyguanosine(in) = 2'-deoxyguanosine(out). It carries out the reaction GDP(in) = GDP(out). It catalyses the reaction guanosine(in) = guanosine(out). The enzyme catalyses GTP(in) = GTP(out). The catalysed reaction is 3',5'-cyclic AMP(in) = 3',5'-cyclic AMP(out). It carries out the reaction creatinine(in) = creatinine(out). It catalyses the reaction prostaglandin E2(out) = prostaglandin E2(in). The enzyme catalyses 2-oxoglutarate(in) = 2-oxoglutarate(out). The catalysed reaction is glutarate(in) = glutarate(out). It carries out the reaction urate(out) = urate(in). It catalyses the reaction estrone 3-sulfate(out) = estrone 3-sulfate(in). The enzyme catalyses prostaglandin F2alpha(out) = prostaglandin F2alpha(in). Functions as a Na(+)-independent bidirectional multispecific transporter. Contributes to the renal and hepatic elimination of endogenous organic compounds from the systemic circulation into the urine and bile, respectively. Capable of transporting a wide range of purine and pyrimidine nucleobases, nucleosides and nucleotides, with cGMP, 2'deoxyguanosine and GMP being the preferred substrates. Functions as a pH- and chloride-independent cGMP bidirectional facilitative transporter that can regulate both intracellular and extracellular levels of cGMP and may be involved in cGMP signaling pathways. Mediates orotate/glutamate bidirectional exchange and most likely display a physiological role in hepatic release of glutamate into the blood. Involved in renal secretion and possible reabsorption of creatinine. Able to uptake prostaglandin E2 (PGE2) and may contribute to PGE2 renal excretion. Also transports alpha-ketoglutarate and urate. Apart from the orotate/glutamate exchange, the counterions for the uptake of other SLC22A7/OAT2 substrates remain to be identified. Functionally, non functional transporter. Its function is as follows. Involved in the uptake of prostaglandin F2-alpha (PGF2-alpha). The chain is Solute carrier family 22 member 7 from Homo sapiens (Human).